The primary structure comprises 170 residues: Peptidyl-prolyl cis-trans isomerase-like 3 (170 aa).

The PPIase cyclophilin-type domain occupies 1–160 (MSVTLHTDLG…QEFRIKSVTI (160 aa)).

This sequence belongs to the cyclophilin-type PPIase family. PPIL3 subfamily.

It catalyses the reaction [protein]-peptidylproline (omega=180) = [protein]-peptidylproline (omega=0). In terms of biological role, PPIases accelerate the folding of proteins. It catalyzes the cis-trans isomerization of proline imidic peptide bonds in oligopeptides. The polypeptide is Peptidyl-prolyl cis-trans isomerase-like 3 (cyp4) (Rhizopus delemar (strain RA 99-880 / ATCC MYA-4621 / FGSC 9543 / NRRL 43880) (Mucormycosis agent)).